Reading from the N-terminus, the 177-residue chain is B-phycoerythrin beta chain (177 aa).

Residues Lys28, Asn35, Asp39, Cys50, Asp54, Cys61, Asn72, 77 to 78 (RR), Cys82, Arg129, 147 to 148 (SQ), 154 to 158 (PQGDC), and Cys158 each bind (2R,3E)-phycoerythrobilin. Asn72 is modified (N4-methylasparagine).

The protein belongs to the phycobiliprotein family. In terms of assembly, heterotetramer of 2 different alpha chains and 2 identical beta chains. The subunit composition could comprise any combination of 2 out of 4 different alpha units with an invariant beta unit. Contains three covalently linked phycoerythrobilin chromophores.

Its subcellular location is the plastid. The protein localises to the chloroplast thylakoid membrane. Its function is as follows. Light-harvesting photosynthetic tetrapyrrole chromophore-protein from the phycobiliprotein complex. This is B-phycoerythrin beta chain (cpeB) from Rhodomonas sp. (strain CS 24) (Chroomonas sp. (strain CS24)).